The primary structure comprises 1172 residues: Tudor domain-containing protein 1 (1172 aa).

Disordered stretches follow at residues 1–59 (MMPR…KNNF) and 72–136 (QEDS…KKSH). Composition is skewed to low complexity over residues 75–86 (SSVVSSNPAVVN) and 103–117 (NPVS…SPPN). Residues 118–129 (QVKTKPSSNVTP) show a composition bias toward polar residues. C163, C166, C174, C177, C183, C187, H195, and C199 together coordinate Zn(2+). Residues 163-199 (CHRCGLFGSLRCSQCKQTYYCSTACQRRDWSSHSTIC) form an MYND-type zinc finger. Tudor domains follow at residues 307–367 (LPVK…LDLF), 536–595 (YPTI…LLDL), 756–815 (KAEI…FLLL), and 982–1040 (RPRT…HLEL).

It belongs to the TDRD1 family. As to quaternary structure, found in a mRNP complex, at least composed of TDRD1, TDRD6, TDRD7 and DDX4. Interacts with MAEL. Interacts with PIWIL1, PIWIL2 and PIWIL4 (when methylated on arginine residues). Interacts with TDRD12. In terms of tissue distribution, testis and ovary specific. Present in germ-line cells and is most abundant in fetal prospermatogonia and postnatal primary spermatocytes (at protein level).

Its subcellular location is the cytoplasm. In terms of biological role, plays a central role during spermatogenesis by participating in the repression transposable elements and preventing their mobilization, which is essential for the germline integrity. Acts via the piRNA metabolic process, which mediates the repression of transposable elements during meiosis by forming complexes composed of piRNAs and Piwi proteins and governs the methylation and subsequent repression of transposons. Required for the localization of Piwi proteins to the meiotic nuage. Involved in the piRNA metabolic process by ensuring the entry of correct transcripts into the normal piRNA pool and limiting the entry of cellular transcripts into the piRNA pathway. May act by allowing the recruitment of piRNA biogenesis or loading factors that ensure the correct entry of transcripts and piRNAs into Piwi proteins. This chain is Tudor domain-containing protein 1 (Tdrd1), found in Mus musculus (Mouse).